A 97-amino-acid chain; its full sequence is Small, acid-soluble spore protein gamma-type (97 aa).

Over residues 1–42 (MAKQTNKTASGTSTQHVKQQNAQASKNNFGTEFGSETNVQEV) the composition is skewed to polar residues. Positions 1–97 (MAKQTNKTAS…KNQNSGKYQG (97 aa)) are disordered. Repeats lie at residues 23–56 (QASK…KSQN) and 58–91 (QASK…KNQN). A compositionally biased stretch (low complexity) spans 43–63 (KQQNAQAAANKSQNAQASKNN). A compositionally biased stretch (polar residues) spans 69–78 (ASETSAQEVR). The segment covering 79–91 (QQNAQAQAKKNQN) has biased composition (low complexity).

The protein belongs to the gamma-type SASP family.

SASP are proteins degraded in the first minutes of spore germination and provide amino acids for both new protein synthesis and metabolism. These proteins may be involved in dormant spore's high resistance to UV light. The protein is Small, acid-soluble spore protein gamma-type (sasP-B) of Priestia megaterium (Bacillus megaterium).